A 305-amino-acid polypeptide reads, in one-letter code: Ribonuclease Z (305 aa).

The Zn(2+) site is built by His-61, His-63, Asp-65, His-66, His-141, Asp-209, and His-268. Catalysis depends on Asp-65, which acts as the Proton acceptor.

This sequence belongs to the RNase Z family. Homodimer. Zn(2+) serves as cofactor.

The catalysed reaction is Endonucleolytic cleavage of RNA, removing extra 3' nucleotides from tRNA precursor, generating 3' termini of tRNAs. A 3'-hydroxy group is left at the tRNA terminus and a 5'-phosphoryl group is left at the trailer molecule.. Its function is as follows. Zinc phosphodiesterase, which displays some tRNA 3'-processing endonuclease activity. Probably involved in tRNA maturation, by removing a 3'-trailer from precursor tRNA. The polypeptide is Ribonuclease Z (Clostridioides difficile (strain 630) (Peptoclostridium difficile)).